The following is a 316-amino-acid chain: Probable cell division protein WhiA (316 aa).

The H-T-H motif DNA-binding region spans 277-310 (SLEQLGRLADPPITKDAIAGRIRRLLQLAEKTEK).

It belongs to the WhiA family.

Functionally, involved in cell division and chromosome segregation. The polypeptide is Probable cell division protein WhiA (Bifidobacterium adolescentis (strain ATCC 15703 / DSM 20083 / NCTC 11814 / E194a)).